Here is a 605-residue protein sequence, read N- to C-terminus: Aspartate--tRNA(Asp/Asn) ligase (605 aa).

Position 176 (glutamate 176) interacts with L-aspartate. Residues 200–203 form an aspartate region; the sequence is QQFK. 2 residues coordinate L-aspartate: arginine 222 and histidine 452. 222–224 contacts ATP; that stretch reads RDE. Glutamate 490 contacts ATP. Arginine 497 provides a ligand contact to L-aspartate. 542–545 is a binding site for ATP; sequence GIDR.

It belongs to the class-II aminoacyl-tRNA synthetase family. Type 1 subfamily. Homodimer.

The protein resides in the cytoplasm. The catalysed reaction is tRNA(Asx) + L-aspartate + ATP = L-aspartyl-tRNA(Asx) + AMP + diphosphate. Aspartyl-tRNA synthetase with relaxed tRNA specificity since it is able to aspartylate not only its cognate tRNA(Asp) but also tRNA(Asn). Reaction proceeds in two steps: L-aspartate is first activated by ATP to form Asp-AMP and then transferred to the acceptor end of tRNA(Asp/Asn). The chain is Aspartate--tRNA(Asp/Asn) ligase from Rickettsia prowazekii (strain Madrid E).